A 385-amino-acid polypeptide reads, in one-letter code: Aldehyde dehydrogenase family 3 member B2 (385 aa).

107–112 contributes to the NAD(+) binding site; that stretch reads GSPRVG. Active-site residues include glutamate 129 and cysteine 163. Cysteine 382 bears the Cysteine methyl ester mark. Cysteine 382 carries the S-geranylgeranyl cysteine lipid modification. A propeptide spans 383-385 (removed in mature form); the sequence is TLL.

The protein belongs to the aldehyde dehydrogenase family. Post-translationally, geranylgeranylation is important for localization to lipid droplets and enzyme activity. Salivary gland. Expressed at protein level in placenta.

The protein localises to the lipid droplet. It carries out the reaction an aldehyde + NAD(+) + H2O = a carboxylate + NADH + 2 H(+). The catalysed reaction is a long-chain fatty aldehyde + NAD(+) + H2O = a long-chain fatty acid + NADH + 2 H(+). It catalyses the reaction a medium-chain fatty aldehyde + NAD(+) + H2O = a medium-chain fatty acid + NADH + 2 H(+). The enzyme catalyses hexadecanoate + NADH + 2 H(+) = hexadecanal + NAD(+) + H2O. It carries out the reaction octanal + NAD(+) + H2O = octanoate + NADH + 2 H(+). Its pathway is alcohol metabolism; ethanol degradation; acetate from ethanol: step 2/2. Functionally, oxidizes medium and long chain fatty aldehydes in lipid droplets into non-toxic fatty acids. This is Aldehyde dehydrogenase family 3 member B2 (ALDH3B2) from Homo sapiens (Human).